Reading from the N-terminus, the 1366-residue chain is MTSSKPKKTSRVRKTTKNSKKNNPVTMPALAKTPPSFKNKVVDKKALKNLVSWAYKTHGTAITAAMADNLKDLGFKYATQAAVSISVDDLKVPDAKQDLIGQAEEQISATEECYRLGEITEVERHTKVIDTWTETNERLVDAVKNNFNQNDPLNSVWMMANSGARGNMSQVRQLVGMRGLMANPQGEIIDLPIRTNFREGLTVTEYVISSYGARKGLVDTALRTADSGYLTRRLVDVAQDVIVREEDCGTERSIVVEAEDGKFGARLLGRLTAEDVLDAEENLLVPQNTAIDPALSGEIEKASINKVKIRSPLTCEANRSVCRRCYGWALAHNHLVDLGEAVGIIAAQSIGEPGTQLTMRTFHTGGVSTAESGVVRSKISGKVEFSSKAKIRGYRTPHGVEAKQAEVDFILKIVPQGNNSGKAQKIEVSSGSLLFVDDGEEINSDITVAQITAGAVKKSVEKATKDVICDLAGQVRYDKVIQPKEVTDRQGNITLKAQRLGRLWVLAGDVYNLPPNARPVISSGKSVDEGTVLAEASQSSEFGGQVRLRESIGDSREVQIVTTSMSLTNFKLIEESTHSGQIYNLESIDGISYRLNISPGSKISNGEVIADLTDERFRTKTGGLVKYAPGLSVKKARSSKNGFEVSQGGTLLWIPQETHEINKDISLLMIEDMKWIEAGTEVVKDIFSQTSGIVTVTQKNDILREITIRNGTFHECDDEEVLNRFTEEGNLVNPGEKILDGVDNKEILFVQKLETPKCRGLLLRTVEEFTIPDQAELPQLAHVKQEKGPYLGLKAIQRLTYKDGELIKSVEGVELLRTHLSIESFDATPQMTIDVESIEDKNDSSINRLNLVILESILVRRDTISDSSHGSTHTELQVNDNQLVKAGDVISTTQILCKEKGLVQLPNVVDDEPIRRLIVERQEDKIKIKISDKALVKVGDRVVDGDPISKSIKSTFCGEIEEVSNSSVTLRYGRPYMVSPDSVLHVKDGDLVLRGDGLALLVFERQKTGDIVQGLPRIEELLEARRPRDAAILCKKSGIVQIKQGNDEESVSLSVIEKDDLVNEYQLLVGKNLMVSDGQQVAGGEPLTDGPLNPHELLDCYFNDLKDQKPLLDAARESISKLQRSMVSEVQNVYKSQGVAIDDKHIEVIVRQMTSKVRIEDAGDTTLLPGELIELRQVEDTNQAMAITGGAPAEFTPVLLGITKASLNTDSFISAASFQETTRVLTEAAIEGKSDWLRGLKENVIIGRLIPAGTGFSGFVEELSSEAGPHPDILAEESGGYRRAQNLRPDYTVDMPQSPAVSSSAILDDPSDEDLETTRNRHGIDPSSSNFAAFARPNAENQFSEDQLPDPAALEGLQEEGLLSDE.

Over residues Met-1–Lys-20 the composition is skewed to basic residues. The interval Met-1–Thr-33 is disordered. The Zn(2+) site is built by Cys-248, Cys-315, Cys-322, and Cys-325. The interval Tyr-1291–Glu-1366 is disordered. Residues Leu-1354–Glu-1366 are compositionally biased toward low complexity.

The protein belongs to the RNA polymerase beta' chain family. RpoC2 subfamily. In cyanobacteria the RNAP catalytic core is composed of 2 alpha, 1 beta, 1 beta', 1 gamma and 1 omega subunit. When a sigma factor is associated with the core the holoenzyme is formed, which can initiate transcription. Zn(2+) serves as cofactor.

The enzyme catalyses RNA(n) + a ribonucleoside 5'-triphosphate = RNA(n+1) + diphosphate. Functionally, DNA-dependent RNA polymerase catalyzes the transcription of DNA into RNA using the four ribonucleoside triphosphates as substrates. This is DNA-directed RNA polymerase subunit beta' from Prochlorococcus marinus (strain AS9601).